The primary structure comprises 467 residues: uncharacterized protein (467 aa).

Lys290 is modified (N6-(pyridoxal phosphate)lysine).

It belongs to the class-III pyridoxal-phosphate-dependent aminotransferase family. Pyridoxal 5'-phosphate is required as a cofactor.

This is an uncharacterized protein from Sinorhizobium fredii (strain NBRC 101917 / NGR234).